The chain runs to 448 residues: Doublesex- and mab-3-related transcription factor A2 (448 aa).

The DM DNA-binding region spans 57–104; that stretch reads CARCRNHGVVSALKGHKRYCRWKDCMCAKCTLIAERQRVMAAQVALRR. The segment covering 166 to 187 has biased composition (polar residues); sequence SQLSGSATPQQSVGKPASTESD. The segment at 166 to 259 is disordered; sequence SQLSGSATPQ…SPSSAASRHM (94 aa). Positions 229 to 239 are enriched in low complexity; it reads GSVSSLGSDSG. Residues 259–294 form the DMA domain; the sequence is MNAIDILTRVFPSHKRSVQELVLQGCGKDVVRAIEQ.

Belongs to the DMRT family.

The protein localises to the nucleus. In terms of biological role, may be involved in sexual development. The polypeptide is Doublesex- and mab-3-related transcription factor A2 (dmrta2) (Monopterus albus (Swamp eel)).